Here is a 210-residue protein sequence, read N- to C-terminus: Uridine kinase P10 (210 aa).

ATP is bound at residue 10–18 (GISGSGKST). Aspartate 41 is a catalytic residue.

It belongs to the uridine kinase family. Interacts with host eIF-2B; this interaction disrupts the interaction between eIF2 and eIF-2B, which leads to the inhibition of stress granules formation.

It is found in the host cytoplasm. The protein localises to the host perinuclear region. It carries out the reaction uridine + ATP = UMP + ADP + H(+). Its function is as follows. Inhibits the integrated stress response (ISR) in the infected cell by preventing the sequestration of eIF2B by phosphorylated EIF2S1/eIF-2alpha. Stress granule formation in response to EIF2S1/eIF-2alpha phosphorylation is thus inhibited, which allows protein synthesis and viral replication. Phosphorylates uridine to uridine monophosphate. This Beluga whale coronavirus (strain SW1) (BwCoV) protein is Uridine kinase P10 (ORF10).